The following is an 862-amino-acid chain: Alpha,alpha-trehalose-phosphate synthase [UDP-forming] 5 (862 aa).

Position 5 is a phosphoserine (S5). Phosphothreonine is present on T32. Residues D60 to R546 are glycosyltransferase.

In the N-terminal section; belongs to the glycosyltransferase 20 family. The protein in the C-terminal section; belongs to the trehalose phosphatase family. In terms of assembly, binds to the phosphopeptide-binding site of GRF/14-3-3 and to MBF1c. In terms of processing, both Ser-5 and Thr-32 must be phosphorylated for binding to GRF/14-3-3. As to expression, low expression in leaves, stems, flower buds, flowers and siliques.

The catalysed reaction is D-glucose 6-phosphate + UDP-alpha-D-glucose = alpha,alpha-trehalose 6-phosphate + UDP + H(+). This Arabidopsis thaliana (Mouse-ear cress) protein is Alpha,alpha-trehalose-phosphate synthase [UDP-forming] 5 (TPS5).